The following is a 493-amino-acid chain: 3-octaprenyl-4-hydroxybenzoate carboxy-lyase (493 aa).

N172 lines the Mn(2+) pocket. Prenylated FMN is bound by residues 175-177 (IYR), 189-191 (RWL), and 194-195 (RG). E238 lines the Mn(2+) pocket. D287 acts as the Proton donor in catalysis.

It belongs to the UbiD family. In terms of assembly, homohexamer. Requires prenylated FMN as cofactor. The cofactor is Mn(2+).

It is found in the cell membrane. It carries out the reaction a 4-hydroxy-3-(all-trans-polyprenyl)benzoate + H(+) = a 2-(all-trans-polyprenyl)phenol + CO2. Its pathway is cofactor biosynthesis; ubiquinone biosynthesis. Functionally, catalyzes the decarboxylation of 3-octaprenyl-4-hydroxy benzoate to 2-octaprenylphenol, an intermediate step in ubiquinone biosynthesis. In Shewanella baltica (strain OS195), this protein is 3-octaprenyl-4-hydroxybenzoate carboxy-lyase.